The sequence spans 419 residues: UDP-N-acetylglucosamine 1-carboxyvinyltransferase 2 (419 aa).

Phosphoenolpyruvate is bound at residue 22–23 (KN). Residue Arg92 participates in UDP-N-acetyl-alpha-D-glucosamine binding. Residue Cys116 is the Proton donor of the active site. The residue at position 116 (Cys116) is a 2-(S-cysteinyl)pyruvic acid O-phosphothioketal. UDP-N-acetyl-alpha-D-glucosamine-binding positions include 121–125 (RPIDL), Asp306, and Val328.

It belongs to the EPSP synthase family. MurA subfamily.

It localises to the cytoplasm. It catalyses the reaction phosphoenolpyruvate + UDP-N-acetyl-alpha-D-glucosamine = UDP-N-acetyl-3-O-(1-carboxyvinyl)-alpha-D-glucosamine + phosphate. The protein operates within cell wall biogenesis; peptidoglycan biosynthesis. Functionally, cell wall formation. Adds enolpyruvyl to UDP-N-acetylglucosamine. This Carboxydothermus hydrogenoformans (strain ATCC BAA-161 / DSM 6008 / Z-2901) protein is UDP-N-acetylglucosamine 1-carboxyvinyltransferase 2.